A 349-amino-acid chain; its full sequence is tRNA pseudouridine synthase D (349 aa).

Position 27 (Phe-27) interacts with substrate. Residue Asp-80 is the Nucleophile of the active site. Residue Asn-129 coordinates substrate. Residues 155–303 (GVPNYFGAQR…VEAARRAMLL (149 aa)) enclose the TRUD domain. A substrate-binding site is contributed by Phe-329.

The protein belongs to the pseudouridine synthase TruD family.

It carries out the reaction uridine(13) in tRNA = pseudouridine(13) in tRNA. In terms of biological role, responsible for synthesis of pseudouridine from uracil-13 in transfer RNAs. This is tRNA pseudouridine synthase D from Klebsiella pneumoniae (strain 342).